The chain runs to 322 residues: DNA repair and recombination protein RadA (322 aa).

105–112 (GMFGSGKT) lines the ATP pocket.

This sequence belongs to the eukaryotic RecA-like protein family.

Functionally, involved in DNA repair and in homologous recombination. Binds and assemble on single-stranded DNA to form a nucleoprotein filament. Hydrolyzes ATP in a ssDNA-dependent manner and promotes DNA strand exchange between homologous DNA molecules. The sequence is that of DNA repair and recombination protein RadA from Methanococcus maripaludis (Methanococcus deltae).